Consider the following 138-residue polypeptide: rRNA methyltransferase 1, mitochondrial (138 aa).

Residues 1–21 constitute a mitochondrion transit peptide; sequence MNNQPCSIVWRRFLTSKVKPA. A disordered region spans residues 92–113; the sequence is KQDILSSKRQQEEHKSKYSRKS.

This sequence belongs to the class IV-like SAM-binding methyltransferase superfamily. RNA methyltransferase TrmH family.

It is found in the mitochondrion. The enzyme catalyses a guanosine in 21S rRNA + S-adenosyl-L-methionine = a 2'-O-methylguanosine in 21S rRNA + S-adenosyl-L-homocysteine + H(+). S-adenosyl-L-methionine-dependent 2'-O-ribose methyltransferase that catalyzes the formation of the 2'-O-methylguanosine corresponding to position 2270 in S.cerevisiae 21S mitochondrial large ribosomal RNA, a universally conserved modification in the peptidyl transferase domain of the 21S rRNA. The sequence is that of rRNA methyltransferase 1, mitochondrial from Lachancea kluyveri (strain ATCC 58438 / CBS 3082 / BCRC 21498 / NBRC 1685 / JCM 7257 / NCYC 543 / NRRL Y-12651) (Yeast).